Consider the following 163-residue polypeptide: uncharacterized protein (163 aa).

Residues 1-33 (MKTLDKITNYDLFDFADEFLKFVPVFRPNPTVT) are Cytoplasmic-facing. A helical membrane pass occupies residues 34–54 (CLFGNPLTNLLVNGTGAACFF). Topologically, residues 55 to 117 (EFCSLALIKV…SLGMALPDDD (63 aa)) are extracellular. The helical transmembrane segment at 118–138 (VLLSITFWFLCNSSFSILFVF) threads the bilayer. Over 139 to 163 (ELRIFLRTVNNLLVVFLSVLKRNDL) the chain is Cytoplasmic.

The protein resides in the membrane. This is an uncharacterized protein from Saccharomyces cerevisiae (strain ATCC 204508 / S288c) (Baker's yeast).